Consider the following 230-residue polypeptide: Ureidoacrylate amidohydrolase RutB (230 aa).

D24 acts as the Proton acceptor in catalysis. K133 is a catalytic residue. C166 serves as the catalytic Nucleophile.

The protein belongs to the isochorismatase family. RutB subfamily.

It catalyses the reaction (Z)-3-ureidoacrylate + H2O + H(+) = (Z)-3-aminoacrylate + NH4(+) + CO2. It carries out the reaction (Z)-3-ureidoacrylate + H2O = (Z)-3-aminoacrylate + carbamate + H(+). The enzyme catalyses (Z)-2-methylureidoacrylate + H2O + H(+) = (Z)-2-methylaminoacrylate + NH4(+) + CO2. Hydrolyzes ureidoacrylate to form aminoacrylate and carbamate. The carbamate hydrolyzes spontaneously, thereby releasing one of the nitrogen atoms of the pyrimidine ring as ammonia and one of its carbon atoms as CO2. This Escherichia coli O44:H18 (strain 042 / EAEC) protein is Ureidoacrylate amidohydrolase RutB.